The following is a 156-amino-acid chain: Ribosomal RNA large subunit methyltransferase H (156 aa).

S-adenosyl-L-methionine is bound by residues Leu73, Gly104, and 123–128 (LSALTL).

It belongs to the RNA methyltransferase RlmH family. In terms of assembly, homodimer.

It localises to the cytoplasm. It carries out the reaction pseudouridine(1915) in 23S rRNA + S-adenosyl-L-methionine = N(3)-methylpseudouridine(1915) in 23S rRNA + S-adenosyl-L-homocysteine + H(+). Its function is as follows. Specifically methylates the pseudouridine at position 1915 (m3Psi1915) in 23S rRNA. The chain is Ribosomal RNA large subunit methyltransferase H from Shewanella loihica (strain ATCC BAA-1088 / PV-4).